A 266-amino-acid polypeptide reads, in one-letter code: Phosphate import ATP-binding protein PstB 1 (266 aa).

Residues Ile21–Ile261 enclose the ABC transporter domain. Residue Gly54–Ser61 participates in ATP binding.

The protein belongs to the ABC transporter superfamily. Phosphate importer (TC 3.A.1.7) family. The complex is composed of two ATP-binding proteins (PstB), two transmembrane proteins (PstC and PstA) and a solute-binding protein (PstS).

The protein resides in the cell membrane. It catalyses the reaction phosphate(out) + ATP + H2O = ADP + 2 phosphate(in) + H(+). In terms of biological role, part of the ABC transporter complex PstSACB involved in phosphate import. Responsible for energy coupling to the transport system. The polypeptide is Phosphate import ATP-binding protein PstB 1 (Lactobacillus johnsonii (strain CNCM I-12250 / La1 / NCC 533)).